Reading from the N-terminus, the 498-residue chain is Ammonium transporter 3 member 1 (498 aa).

The next 11 membrane-spanning stretches (helical) occupy residues I33–I53, W58–V78, M143–L163, W171–W191, G206–G226, V241–G261, N276–F296, V301–L321, W325–V345, G369–L389, and V412–A432. A disordered region spans residues D478–V498. Over residues N487 to V498 the composition is skewed to polar residues.

It belongs to the ammonia transporter channel (TC 1.A.11.2) family. As to expression, expressed in root.

It localises to the membrane. Involved in ammonium transport. This Oryza sativa subsp. japonica (Rice) protein is Ammonium transporter 3 member 1 (AMT3-1).